The primary structure comprises 710 residues: Solute carrier organic anion transporter family member 3A1 (710 aa).

Methionine 1 carries the N-acetylmethionine modification. Gly residues predominate over residues methionine 1 to serine 15. Residues methionine 1 to arginine 25 are disordered. The Cytoplasmic portion of the chain corresponds to methionine 1–lysine 40. The chain crosses the membrane as a helical span at residues isoleucine 41–leucine 60. At valine 61–glycine 79 the chain is on the extracellular side. A helical membrane pass occupies residues valine 80–glycine 100. Topologically, residues alanine 101–proline 106 are cytoplasmic. Residues arginine 107–histidine 131 form a helical membrane-spanning segment. Over glutamine 132–asparagine 174 the chain is Extracellular. N-linked (GlcNAc...) asparagine glycans are attached at residues asparagine 153 and asparagine 169. The helical transmembrane segment at methionine 175–aspartate 203 threads the bilayer. The Cytoplasmic segment spans residues aspartate 204–leucine 222. The helical transmembrane segment at valine 223–alanine 243 threads the bilayer. Over valine 244–isoleucine 261 the chain is Extracellular. The helical transmembrane segment at glycine 262 to proline 286 threads the bilayer. The Cytoplasmic portion of the chain corresponds to glutamine 287–histidine 344. A helical membrane pass occupies residues leucine 345–alanine 366. Topologically, residues glycine 367–serine 386 are extracellular. Asparagine 381 carries an N-linked (GlcNAc...) asparagine glycan. The helical transmembrane segment at alanine 387 to valine 410 threads the bilayer. Residues lysine 411–serine 414 are Cytoplasmic-facing. The chain crosses the membrane as a helical span at residues leucine 415 to phenylalanine 438. The Extracellular portion of the chain corresponds to leucine 439–phenylalanine 539. Asparagine 457 is a glycosylation site (N-linked (GlcNAc...) asparagine). The region spanning leucine 465 to threonine 513 is the Kazal-like domain. 3 cysteine pairs are disulfide-bonded: cysteine 471-cysteine 501, cysteine 477-cysteine 497, and cysteine 486-cysteine 511. N-linked (GlcNAc...) asparagine glycosylation is found at asparagine 502, asparagine 505, and asparagine 519. A helical membrane pass occupies residues leucine 540 to isoleucine 562. Topologically, residues arginine 563–serine 571 are cytoplasmic. Residues tyrosine 572–isoleucine 597 form a helical membrane-spanning segment. The Extracellular segment spans residues aspartate 598–alanine 630. Residues isoleucine 631–leucine 648 form a helical membrane-spanning segment. The Cytoplasmic segment spans residues arginine 649–asparagine 705.

Belongs to the organo anion transporter (TC 2.A.60) family. As to expression, generally the expression of isoform 1 is higher than that of isoform 2. Expressed in placental trophoblasts. Expressed in pancreas, kidney, liver, lung, brain, heart, cerebellum, peripheral blood leukocyte, colon, small intestine, ovary, testis, prostate, thyroid, thymus and spleen. Expressed in fetal brain, heart, kidney, liver, lung, skeletal muscle, spleen and pancreas. In testis, detected in spermatogonia at different stages and absent from Sertoli cells. Expressed in the choroid plexus epithelium, at the basolateral membrane. In brain, also very abundant in the gray matter of the frontal cortex, but not associated with neuronal cell bodies. Not detected in the white matter. In terms of tissue distribution, expressed in heart, brain, cerebellum, testis, lung, thyroid, spoleen and liver. In testis, primarily localized to the basal membrane of Sertoli cells and weakly expressed within the tubules. In testis, also present in spermatogonia at different stages. In brain, expressed in the choroid plexus epithelium, at the apical membrane as well as in the subapical intracellular vesicular compartments. In brain, also associated with neuronal bodies and axons in both the gray and the white matters of the frontal cortex.

Its subcellular location is the basolateral cell membrane. It is found in the apical cell membrane. It localises to the basal cell membrane. The enzyme catalyses L-thyroxine(out) = L-thyroxine(in). It carries out the reaction prostaglandin E1(out) = prostaglandin E1(in). It catalyses the reaction prostaglandin E2(out) = prostaglandin E2(in). The catalysed reaction is prostaglandin F2alpha(out) = prostaglandin F2alpha(in). The enzyme catalyses (5Z,8Z,11Z,14Z)-eicosatetraenoate(out) = (5Z,8Z,11Z,14Z)-eicosatetraenoate(in). It carries out the reaction taurocholate(out) = taurocholate(in). It catalyses the reaction glycocholate(out) = glycocholate(in). The catalysed reaction is estrone 3-sulfate(out) = estrone 3-sulfate(in). The enzyme catalyses argipressin(out) = argipressin(in). Stimulated by extracellular acidic pH. Putative organic anion antiporter with apparent broad substrate specificity. Recognizes various substrates including thyroid hormone L-thyroxine, prostanoids such as prostaglandin E1 and E2, bile acids such as taurocholate, glycolate and glycochenodeoxycholate and peptide hormones such as L-arginine vasopressin, likely operating in a tissue-specific manner. The transport mechanism, its electrogenicity and potential tissue-specific counterions remain to be elucidated. The sequence is that of Solute carrier organic anion transporter family member 3A1 (SLCO3A1) from Homo sapiens (Human).